Consider the following 518-residue polypeptide: Nif-specific regulatory protein (518 aa).

The GAF domain maps to 35–176; it reads NTARALAAIL…MVANLISQPL (142 aa). The region spanning 205–432 is the Sigma-54 factor interaction domain; it reads VGKSQAMRQT…LENCLERASV (228 aa). ATP-binding positions include 232–239 and 295–304; these read GESGTGKE and ADGGTLFLDE. The interval 433 to 475 is inter-domain linker; it reads MTDEGLIDRDVILFNHHESPALSVKPGLPLATDESWLDQELDE. The segment at 476–518 is C-terminal DNA-binding domain; that stretch reads RQRVIAALEKTGWVQAKAARLLGMTPRQIAYRIQIMDINMHRI. The H-T-H motif DNA-binding region spans 490-509; sequence QAKAARLLGMTPRQIAYRIQ.

In terms of assembly, interacts with sigma-54.

Functionally, required for activation of most nif operons, which are directly involved in nitrogen fixation. The sequence is that of Nif-specific regulatory protein (nifA) from Enterobacter agglomerans (Erwinia herbicola).